The sequence spans 391 residues: tRNA-specific 2-thiouridylase MnmA (391 aa).

ATP contacts are provided by residues 20–27 and leucine 46; that span reads AMSGGVDS. The active-site Nucleophile is the cysteine 114. The cysteines at positions 114 and 210 are disulfide-linked. Glycine 138 provides a ligand contact to ATP. The tract at residues 160–162 is interaction with tRNA; sequence RDQ. Catalysis depends on cysteine 210, which acts as the Cysteine persulfide intermediate.

The protein belongs to the MnmA/TRMU family.

It is found in the cytoplasm. It catalyses the reaction S-sulfanyl-L-cysteinyl-[protein] + uridine(34) in tRNA + AH2 + ATP = 2-thiouridine(34) in tRNA + L-cysteinyl-[protein] + A + AMP + diphosphate + H(+). Functionally, catalyzes the 2-thiolation of uridine at the wobble position (U34) of tRNA, leading to the formation of s(2)U34. This chain is tRNA-specific 2-thiouridylase MnmA, found in Bartonella bacilliformis (strain ATCC 35685 / KC583 / Herrer 020/F12,63).